We begin with the raw amino-acid sequence, 315 residues long: Olfactory receptor 8J3 (315 aa).

Residues 1-25 (MAPENFTRVTEFILTGVSSCPELQI) lie on the Extracellular side of the membrane. An N-linked (GlcNAc...) asparagine glycan is attached at N5. The chain crosses the membrane as a helical span at residues 26–46 (PLFLVFLVLYVLTMAGNLGII). The Cytoplasmic portion of the chain corresponds to 47–54 (TLTSVDSR). Residues 55-75 (LQNPMYFFLRHLAIINLGNST) form a helical membrane-spanning segment. Topologically, residues 76–99 (VIAPKMLMNFLVKKKTTSFYECAT) are extracellular. C97 and C189 form a disulfide bridge. Residues 100-120 (QLGGFLFFIVSEVMMLAVMAY) traverse the membrane as a helical segment. The Cytoplasmic segment spans residues 121–139 (DRYVAICNPLLYMVVVSRR). Residues 140–160 (LCLLLVSLTYLYGFSTAIVVS) traverse the membrane as a helical segment. The Extracellular portion of the chain corresponds to 161 to 197 (PCIFSVSYCSSNIINHFYCDIAPLLALSCSDTYIPET). Residues 198–217 (IVFISAATNLVFSMITVLVS) traverse the membrane as a helical segment. The Cytoplasmic segment spans residues 218 to 237 (YFNIVLSILRIRSPEGRKKA). Residues 238–258 (FSTCASHMIAVTVFYGTMLFM) traverse the membrane as a helical segment. Over 259–271 (YLQPQTNHSLDTD) the chain is Extracellular. N-linked (GlcNAc...) asparagine glycosylation is present at N265. A helical transmembrane segment spans residues 272–292 (KMASVFYTLVIPMLNPLIYSL). Over 293-315 (RNNDVNVALKKFMENPCYSFKSM) the chain is Cytoplasmic.

It belongs to the G-protein coupled receptor 1 family.

The protein resides in the cell membrane. In terms of biological role, odorant receptor. The polypeptide is Olfactory receptor 8J3 (OR8J3) (Homo sapiens (Human)).